Reading from the N-terminus, the 399-residue chain is MNDTVREPAGGLGVNHGPALSVVLAGGGTAGHVEPAMAVADALSVLEPNVRITALGTSRGLETRLVPARGYHLELITPVPLPRKPSGDLARLPPRVWRSVRETRAVLDLVDADVVIGFGGYVALPAYLAARGIPGLRRRIPVVIHEANARAGLANRVGLRTADRVLSAVPDSGLRGAEVVGVPVRAAITALDRMALRAEARAHFGFADDARVLLVFGGSQGAVSLNKAVSAAAAELAASGVSVLHAHGPKNVLELLAPRTPDQDDPPYVAVPYLDRMDLAYAAADLVICRSGAMTVAEVSAVGLPAIYVPLPIGNGEQRLNALPVVNAGGGMVVADADLTPALVAREVTGLLTDPPRLAAMTAAAAQVGHRDAAAQVAQAALDIARLAPSRRRAVGGRR.

Residues threonine 29–glycine 31, asparagine 148, arginine 185, serine 219, and glutamine 318 each bind UDP-N-acetyl-alpha-D-glucosamine.

Belongs to the glycosyltransferase 28 family. MurG subfamily.

It localises to the cell membrane. It catalyses the reaction di-trans,octa-cis-undecaprenyl diphospho-N-acetyl-alpha-D-muramoyl-L-alanyl-D-glutamyl-meso-2,6-diaminopimeloyl-D-alanyl-D-alanine + UDP-N-acetyl-alpha-D-glucosamine = di-trans,octa-cis-undecaprenyl diphospho-[N-acetyl-alpha-D-glucosaminyl-(1-&gt;4)]-N-acetyl-alpha-D-muramoyl-L-alanyl-D-glutamyl-meso-2,6-diaminopimeloyl-D-alanyl-D-alanine + UDP + H(+). It participates in cell wall biogenesis; peptidoglycan biosynthesis. Its function is as follows. Cell wall formation. Catalyzes the transfer of a GlcNAc subunit on undecaprenyl-pyrophosphoryl-MurNAc-pentapeptide (lipid intermediate I) to form undecaprenyl-pyrophosphoryl-MurNAc-(pentapeptide)GlcNAc (lipid intermediate II). This chain is UDP-N-acetylglucosamine--N-acetylmuramyl-(pentapeptide) pyrophosphoryl-undecaprenol N-acetylglucosamine transferase, found in Mycobacterium ulcerans (strain Agy99).